The primary structure comprises 227 residues: Large ribosomal subunit protein uL1 (227 aa).

This sequence belongs to the universal ribosomal protein uL1 family. Part of the 50S ribosomal subunit.

In terms of biological role, binds directly to 23S rRNA. The L1 stalk is quite mobile in the ribosome, and is involved in E site tRNA release. Protein L1 is also a translational repressor protein, it controls the translation of the L11 operon by binding to its mRNA. This chain is Large ribosomal subunit protein uL1, found in Brevibacillus brevis (strain 47 / JCM 6285 / NBRC 100599).